We begin with the raw amino-acid sequence, 466 residues long: Glutamate decarboxylase (466 aa).

Lys-277 carries the post-translational modification N6-(pyridoxal phosphate)lysine.

Belongs to the group II decarboxylase family. It depends on pyridoxal 5'-phosphate as a cofactor.

It carries out the reaction L-glutamate + H(+) = 4-aminobutanoate + CO2. Its function is as follows. Converts internalized glutamate to GABA and increases the internal pH. Involved in glutamate-dependent acid resistance. The sequence is that of Glutamate decarboxylase (gadB) from Lactococcus lactis subsp. cremoris (strain MG1363).